Reading from the N-terminus, the 232-residue chain is AA9 family lytic polysaccharide monooxygenase C (232 aa).

An N-terminal signal peptide occupies residues 1–19; sequence MKAAVSLALLVAVAGAASA. Cu(2+) contacts are provided by H20 and H91. Residues C61 and C180 are joined by a disulfide bond. 2 residues coordinate O2: H166 and Q175. Y177 contributes to the Cu(2+) binding site. N184 carries an N-linked (GlcNAc...) asparagine glycan.

Belongs to the polysaccharide monooxygenase AA9 family. Cu(2+) is required as a cofactor.

It localises to the secreted. It catalyses the reaction [(1-&gt;4)-beta-D-glucosyl]n+m + reduced acceptor + O2 = 4-dehydro-beta-D-glucosyl-[(1-&gt;4)-beta-D-glucosyl]n-1 + [(1-&gt;4)-beta-D-glucosyl]m + acceptor + H2O.. Functionally, lytic polysaccharide monooxygenase (LPMO) that depolymerizes crystalline and amorphous polysaccharides via the oxidation of scissile alpha- or beta-(1-4)-glycosidic bonds, yielding C1 or C4 oxidation products. Catalysis by LPMOs requires the reduction of the active-site copper from Cu(II) to Cu(I) by a reducing agent and H(2)O(2) or O(2) as a cosubstrate. In Malbranchea cinnamomea (Thermophilic fungus), this protein is AA9 family lytic polysaccharide monooxygenase C.